The sequence spans 417 residues: Probable serine/threonine-protein kinase WNK9 (417 aa).

Residues 1 to 23 (MDLVEAEAEEQPPDEDGDEEGYV) form a disordered region. One can recognise a Protein kinase domain in the interval 32 to 289 (IRYDEIVGSG…ATELLKSSFL (258 aa)). ATP-binding positions include 113 to 116 (TELF) and Lys163. The active-site Proton acceptor is the Asp180.

Belongs to the protein kinase superfamily. Ser/Thr protein kinase family. WNK subfamily.

It carries out the reaction L-seryl-[protein] + ATP = O-phospho-L-seryl-[protein] + ADP + H(+). The enzyme catalyses L-threonyl-[protein] + ATP = O-phospho-L-threonyl-[protein] + ADP + H(+). This Oryza sativa subsp. japonica (Rice) protein is Probable serine/threonine-protein kinase WNK9 (WNK9).